A 71-amino-acid polypeptide reads, in one-letter code: MAVPKKRTSRSKKKIRKNVRKGKKHIGPAIKAFSLAKSISTGHSKSFYCIVNDDSSGSSESKLTAFDLDDP.

A disordered region spans residues 1–24; it reads MAVPKKRTSRSKKKIRKNVRKGKK.

The protein belongs to the bacterial ribosomal protein bL32 family.

The protein resides in the plastid. Its subcellular location is the chloroplast. In Pinus koraiensis (Korean pine), this protein is Large ribosomal subunit protein bL32c.